Reading from the N-terminus, the 203-residue chain is MTTETFVKDVKPGLKNLSVLFIVLETGRVTKTKDGHEVRTCKVADKTGSINISVWDELGNFIQPGDIIRLSKGYASLFKGCLTLYTGRGGDLQKIGEFCMVYSEVPNFSEPNPEYIAQQSQSKQGQQESGTGTNNHNSSSPAPPASDLENGNGSNSSGPPAHQSTAPAHSASGRITRSQPNHSLPGAPNSVSNGKESRRTGKR.

The OB DNA-binding region spans 22 to 92; sequence IVLETGRVTK…TLYTGRGGDL (71 aa). Residues 110 to 203 form a disordered region; sequence EPNPEYIAQQ…GKESRRTGKR (94 aa). Residues 118–140 show a composition bias toward low complexity; sequence QQSQSKQGQQESGTGTNNHNSSS. Positions 149 to 182 are enriched in polar residues; the sequence is ENGNGSNSSGPPAHQSTAPAHSASGRITRSQPNH.

The protein belongs to the SOSS-B family. SOSS-B1 subfamily. Component of the SOSS complex, composed of soss-b (soss-b1/nabp2 or soss-b2/nabp1), soss-a/ints3 and soss-c/inip. SOSS complexes containing soss-b1/nabp2 are more abundant than complexes containing soss-b2/nabp1.

The protein localises to the nucleus. Component of the SOSS complex, a multiprotein complex that functions downstream of the MRN complex to promote DNA repair and G2/M checkpoint. In the SOSS complex, acts as a sensor of single-stranded DNA that binds to single-stranded DNA. The SOSS complex associates with DNA lesions and influences diverse endpoints in the cellular DNA damage response including cell-cycle checkpoint activation, recombinational repair and maintenance of genomic stability. Required for efficient homologous recombination-dependent repair of double-strand breaks (DSBs). The chain is SOSS complex subunit B1-A (nabp2-a) from Xenopus laevis (African clawed frog).